Reading from the N-terminus, the 374-residue chain is STAGKVIKCKAAITWEIKKPFSIEEIEVAPPKAHEVRIKILATGICRSDDHVTAGLLTMPLPMILGHEAAGVVESTGEGVTSLKPGDKVIPLFVPQCGECMPCLKSNGNLCIRNDLGSPSGLMADGTSRFTCKGKDIHHFIGTSTFTEYTVVHETAVARIDAAAPLEKVCLIGCGFSTGYGAAVKDAKVEPGSTCAVFGLGGVGLSTIMGCKAAGASRIIGIDINKDKFAKAKELGATECINPLDCKKPIQEVLSEMTGGGVDYSFEVIGRIDTMTAALACCQDNYGTSVIVGVPPASEKITFNPMMLFTGRTWKGSVFGGWKSKESVPKLVADYMEKKINLDGLITHTLPFDKINEGFELLRTGKSIRSVLTF.

Ser1 is subject to N-acetylserine. Positions 46, 67, 97, 100, 103, 111, and 174 each coordinate Zn(2+). Residues 199-204, Asp223, Lys228, 292-294, and Arg369 contribute to the NAD(+) site; these read GLGGVG and VGV.

The protein belongs to the zinc-containing alcohol dehydrogenase family. Class-I subfamily. It depends on Zn(2+) as a cofactor.

It is found in the cytoplasm. It catalyses the reaction a primary alcohol + NAD(+) = an aldehyde + NADH + H(+). The enzyme catalyses a secondary alcohol + NAD(+) = a ketone + NADH + H(+). The chain is Alcohol dehydrogenase 1 from Alligator mississippiensis (American alligator).